A 376-amino-acid chain; its full sequence is UDP-N-acetylglucosamine--N-acetylmuramyl-(pentapeptide) pyrophosphoryl-undecaprenol N-acetylglucosamine transferase (376 aa).

UDP-N-acetyl-alpha-D-glucosamine-binding positions include Thr-11–Gly-13, Asn-117, Arg-160, Ser-208, and Gln-310.

The protein belongs to the glycosyltransferase 28 family. MurG subfamily.

Its subcellular location is the cell inner membrane. The enzyme catalyses di-trans,octa-cis-undecaprenyl diphospho-N-acetyl-alpha-D-muramoyl-L-alanyl-D-glutamyl-meso-2,6-diaminopimeloyl-D-alanyl-D-alanine + UDP-N-acetyl-alpha-D-glucosamine = di-trans,octa-cis-undecaprenyl diphospho-[N-acetyl-alpha-D-glucosaminyl-(1-&gt;4)]-N-acetyl-alpha-D-muramoyl-L-alanyl-D-glutamyl-meso-2,6-diaminopimeloyl-D-alanyl-D-alanine + UDP + H(+). The protein operates within cell wall biogenesis; peptidoglycan biosynthesis. In terms of biological role, cell wall formation. Catalyzes the transfer of a GlcNAc subunit on undecaprenyl-pyrophosphoryl-MurNAc-pentapeptide (lipid intermediate I) to form undecaprenyl-pyrophosphoryl-MurNAc-(pentapeptide)GlcNAc (lipid intermediate II). The protein is UDP-N-acetylglucosamine--N-acetylmuramyl-(pentapeptide) pyrophosphoryl-undecaprenol N-acetylglucosamine transferase of Rickettsia conorii (strain ATCC VR-613 / Malish 7).